The following is a 268-amino-acid chain: Cytochrome b-c1 complex subunit Rieske-5, mitochondrial (268 aa).

The transit peptide at 1–56 directs the protein to the mitochondrion; the sequence is MLRIAGRKLSSSAAARSSSAFFTRNPFTFTDDSSSPTRSPSPTSLASQFLDQFRGF. The Mitochondrial matrix segment spans residues 57–105; the sequence is SSNSVSPAHQTGLVSDLPATVAAIKNPSSKIVYDDSNHERYPPGDPSKR. The chain crosses the membrane as a helical span at residues 106–128; sequence AFAYFVLTGGRFVYASLVRLLIL. At 129 to 268 the chain is on the mitochondrial intermembrane side; sequence KFVLSMSASK…FMEENKLLIG (140 aa). The Rieske domain occupies 178-266; sequence INLANSVDLG…YSFMEENKLL (89 aa). [2Fe-2S] cluster contacts are provided by C211, H213, C230, and H233. C216 and C232 are joined by a disulfide.

Belongs to the Rieske iron-sulfur protein family. In terms of assembly, component of the ubiquinol-cytochrome c oxidoreductase (cytochrome b-c1 complex, complex III, CIII), a multisubunit enzyme composed of 3 respiratory subunits cytochrome b, cytochrome c1 and Rieske protein, 2 core protein subunits, and several low-molecular weight protein subunits. The complex exists as an obligatory dimer and forms supercomplexes (SCs) in the inner mitochondrial membrane with cytochrome c oxidase (complex IV, CIV). It depends on [2Fe-2S] cluster as a cofactor. As to expression, high levels are seen in the flowers while a low level expression is seen in the roots, leaves and stems.

It is found in the mitochondrion inner membrane. The enzyme catalyses a quinol + 2 Fe(III)-[cytochrome c](out) = a quinone + 2 Fe(II)-[cytochrome c](out) + 2 H(+)(out). In terms of biological role, component of the ubiquinol-cytochrome c oxidoreductase, a multisubunit transmembrane complex that is part of the mitochondrial electron transport chain which drives oxidative phosphorylation. The respiratory chain contains 3 multisubunit complexes succinate dehydrogenase (complex II, CII), ubiquinol-cytochrome c oxidoreductase (cytochrome b-c1 complex, complex III, CIII) and cytochrome c oxidase (complex IV, CIV), that cooperate to transfer electrons derived from NADH and succinate to molecular oxygen, creating an electrochemical gradient over the inner membrane that drives transmembrane transport and the ATP synthase. The cytochrome b-c1 complex catalyzes electron transfer from ubiquinol to cytochrome c, linking this redox reaction to translocation of protons across the mitochondrial inner membrane, with protons being carried across the membrane as hydrogens on the quinol. In the process called Q cycle, 2 protons are consumed from the matrix, 4 protons are released into the intermembrane space and 2 electrons are passed to cytochrome c. The Rieske protein is a catalytic core subunit containing a [2Fe-2S] iron-sulfur cluster. It cycles between 2 conformational states during catalysis to transfer electrons from the quinol bound in the Q(0) site in cytochrome b to cytochrome c1. This chain is Cytochrome b-c1 complex subunit Rieske-5, mitochondrial, found in Nicotiana tabacum (Common tobacco).